Here is a 176-residue protein sequence, read N- to C-terminus: RNA pyrophosphohydrolase (176 aa).

A Nudix hydrolase domain is found at 6–149; sequence GYRPNVGIVI…KRDVYRRVMK (144 aa). A Nudix box motif is present at residues 38–59; it reads GGINPGESPEQAMYRELYEEVG.

This sequence belongs to the Nudix hydrolase family. RppH subfamily. It depends on a divalent metal cation as a cofactor.

Accelerates the degradation of transcripts by removing pyrophosphate from the 5'-end of triphosphorylated RNA, leading to a more labile monophosphorylated state that can stimulate subsequent ribonuclease cleavage. This chain is RNA pyrophosphohydrolase, found in Photorhabdus laumondii subsp. laumondii (strain DSM 15139 / CIP 105565 / TT01) (Photorhabdus luminescens subsp. laumondii).